The chain runs to 569 residues: Laccase-14 (569 aa).

A signal peptide spans 1–33 (MEFKLNIPNTIIKTLQTIVFFLFVLLAFQIAEA). Plastocyanin-like domains are found at residues 41–157 (KIKS…PKRG) and 167–320 (REIP…YKGD). N-linked (GlcNAc...) asparagine glycosylation is present at Asn-87. Residues His-91, His-93, His-136, and His-138 each contribute to the Cu cation site. N-linked (GlcNAc...) asparagine glycans are attached at residues Asn-190, Asn-249, Asn-336, Asn-374, Asn-395, Asn-430, and Asn-452. Residues 420–553 (DFPRNPPTKF…NTVFIVKDGP (134 aa)) enclose the Plastocyanin-like 3 domain. Cu cation is bound by residues His-470, His-473, His-475, His-532, Cys-533, His-534, His-538, and Met-543.

It belongs to the multicopper oxidase family. Cu cation serves as cofactor. Expressed at low levels in flowers and siliques.

It localises to the secreted. The protein resides in the extracellular space. It is found in the apoplast. The catalysed reaction is 4 hydroquinone + O2 = 4 benzosemiquinone + 2 H2O. Lignin degradation and detoxification of lignin-derived products. This Arabidopsis thaliana (Mouse-ear cress) protein is Laccase-14 (LAC14).